The primary structure comprises 277 residues: MMDFWTAFQAIILGVVEGLTEFLPISSTGHQIIVADLIGFGGERAMAFNIIIQLAAILAVVWEFRSKIFEVVFGLTNQPKARRFTGNLLLAFMPAVVLGVLFADLIHEYLFNPVTVAAALVVGGVIMLWAERREHRVEVDHVDDMRWSHALKIGFIQCLAMIPGTSRSGSTIIGGLLFGLSRKAATEFSFFLAMPTMVGAAVYSGYKYRDLFQPGDLPVFALGFVTSFIFAMIAVRALLKFIANHSYAAFAWYRIVFGLFILATWQFGWVDWSTAHG.

6 consecutive transmembrane segments (helical) span residues 44 to 64, 86 to 106, 110 to 130, 184 to 204, 215 to 235, and 250 to 270; these read RAMA…VWEF, GNLL…ADLI, LFNP…MLWA, AATE…AVYS, GDLP…MIAV, and FAWY…FGWV.

This sequence belongs to the UppP family.

The protein localises to the cell inner membrane. It carries out the reaction di-trans,octa-cis-undecaprenyl diphosphate + H2O = di-trans,octa-cis-undecaprenyl phosphate + phosphate + H(+). Catalyzes the dephosphorylation of undecaprenyl diphosphate (UPP). Confers resistance to bacitracin. The chain is Undecaprenyl-diphosphatase from Pseudomonas putida (strain ATCC 47054 / DSM 6125 / CFBP 8728 / NCIMB 11950 / KT2440).